Here is a 375-residue protein sequence, read N- to C-terminus: Growth/differentiation factor 8 (375 aa).

A signal peptide spans 1 to 18 (MQRLQICVYIYLFVLIVA). A propeptide spanning residues 19–266 (GPVDLSENSE…VTDTPKRSRR (248 aa)) is cleaved from the precursor. Asn-71 carries an N-linked (GlcNAc...) asparagine glycan. Intrachain disulfides connect Cys-272-Cys-282, Cys-281-Cys-340, Cys-309-Cys-372, and Cys-313-Cys-374.

It belongs to the TGF-beta family. Homodimer; disulfide-linked. Interacts with WFIKKN2, leading to inhibit its activity. Interacts with FSTL3. Post-translationally, synthesized as large precursor molecule that undergoes proteolytic cleavage to generate an N-terminal propeptide and a disulfide linked C-terminal dimer, which is the biologically active molecule. The circulating form consists of a latent complex of the C-terminal dimer and other proteins, including its propeptide, which maintain the C-terminal dimer in a latent, inactive state. Ligand activation requires additional cleavage of the prodomain by a tolloid-like metalloproteinase.

The protein resides in the secreted. Its function is as follows. Acts specifically as a negative regulator of skeletal muscle growth. In Canis lupus familiaris (Dog), this protein is Growth/differentiation factor 8 (MSTN).